Reading from the N-terminus, the 316-residue chain is Probable cell division protein WhiA (316 aa).

Residues Ser-276–Lys-309 constitute a DNA-binding region (H-T-H motif).

It belongs to the WhiA family.

Involved in cell division and chromosome segregation. The polypeptide is Probable cell division protein WhiA (Bifidobacterium longum subsp. infantis (strain ATCC 15697 / DSM 20088 / JCM 1222 / NCTC 11817 / S12)).